A 388-amino-acid polypeptide reads, in one-letter code: Ferrochelatase (388 aa).

Histidine 196 and glutamate 277 together coordinate Fe cation.

This sequence belongs to the ferrochelatase family.

Its subcellular location is the cytoplasm. The catalysed reaction is heme b + 2 H(+) = protoporphyrin IX + Fe(2+). It participates in porphyrin-containing compound metabolism; protoheme biosynthesis; protoheme from protoporphyrin-IX: step 1/1. Functionally, catalyzes the ferrous insertion into protoporphyrin IX. This Trichormus variabilis (strain ATCC 29413 / PCC 7937) (Anabaena variabilis) protein is Ferrochelatase.